Consider the following 451-residue polypeptide: 23S rRNA (uracil(1939)-C(5))-methyltransferase RlmD (451 aa).

The segment at 1–21 (MAKHERGLRFQPTGGVKSVQI) is disordered. Positions 20–78 (QIPAGKKQRLSIERLSDDGRGIAFLEGKTWFVAGSLAGEEVEARVLNARGKVVEARTER) constitute a TRAM domain. Residues C91, C97, C100, and C179 each contribute to the [4Fe-4S] cluster site. S-adenosyl-L-methionine contacts are provided by Q283, F312, N317, E333, D360, and D381. The active-site Nucleophile is C407.

This sequence belongs to the class I-like SAM-binding methyltransferase superfamily. RNA M5U methyltransferase family. RlmD subfamily.

It catalyses the reaction uridine(1939) in 23S rRNA + S-adenosyl-L-methionine = 5-methyluridine(1939) in 23S rRNA + S-adenosyl-L-homocysteine + H(+). Its function is as follows. Catalyzes the formation of 5-methyl-uridine at position 1939 (m5U1939) in 23S rRNA. The protein is 23S rRNA (uracil(1939)-C(5))-methyltransferase RlmD of Pseudomonas syringae pv. tomato (strain ATCC BAA-871 / DC3000).